The primary structure comprises 381 residues: 1-deoxy-D-xylulose 5-phosphate reductoisomerase (381 aa).

6 residues coordinate NADPH: threonine 11, glycine 12, serine 13, isoleucine 14, asparagine 37, and asparagine 121. Lysine 122 is a 1-deoxy-D-xylulose 5-phosphate binding site. Glutamate 123 provides a ligand contact to NADPH. Aspartate 147 contributes to the Mn(2+) binding site. 1-deoxy-D-xylulose 5-phosphate contacts are provided by serine 148, glutamate 149, serine 173, and histidine 196. Glutamate 149 is a binding site for Mn(2+). Glycine 202 contacts NADPH. Positions 209, 214, 215, and 218 each coordinate 1-deoxy-D-xylulose 5-phosphate. Position 218 (glutamate 218) interacts with Mn(2+).

It belongs to the DXR family. It depends on Mg(2+) as a cofactor. Mn(2+) serves as cofactor.

The catalysed reaction is 2-C-methyl-D-erythritol 4-phosphate + NADP(+) = 1-deoxy-D-xylulose 5-phosphate + NADPH + H(+). It functions in the pathway isoprenoid biosynthesis; isopentenyl diphosphate biosynthesis via DXP pathway; isopentenyl diphosphate from 1-deoxy-D-xylulose 5-phosphate: step 1/6. In terms of biological role, catalyzes the NADPH-dependent rearrangement and reduction of 1-deoxy-D-xylulose-5-phosphate (DXP) to 2-C-methyl-D-erythritol 4-phosphate (MEP). This Ruminiclostridium cellulolyticum (strain ATCC 35319 / DSM 5812 / JCM 6584 / H10) (Clostridium cellulolyticum) protein is 1-deoxy-D-xylulose 5-phosphate reductoisomerase.